Consider the following 354-residue polypeptide: Ferrochelatase (354 aa).

Fe cation is bound by residues His204 and Glu306.

Belongs to the ferrochelatase family.

The protein resides in the cytoplasm. It catalyses the reaction heme b + 2 H(+) = protoporphyrin IX + Fe(2+). The protein operates within porphyrin-containing compound metabolism; protoheme biosynthesis; protoheme from protoporphyrin-IX: step 1/1. Catalyzes the ferrous insertion into protoporphyrin IX. The sequence is that of Ferrochelatase from Coxiella burnetii (strain CbuG_Q212) (Coxiella burnetii (strain Q212)).